The sequence spans 330 residues: GTP 3',8-cyclase (330 aa).

The Radical SAM core domain occupies 14–225; it reads RFGRTVDYVR…RERLADAYPE (212 aa). Position 23 (R23) interacts with GTP. Positions 30 and 34 each coordinate [4Fe-4S] cluster. Y36 lines the S-adenosyl-L-methionine pocket. Residue C37 coordinates [4Fe-4S] cluster. R70 serves as a coordination point for GTP. G74 contributes to the S-adenosyl-L-methionine binding site. Residue T101 coordinates GTP. S125 provides a ligand contact to S-adenosyl-L-methionine. K162 serves as a coordination point for GTP. The [4Fe-4S] cluster site is built by C259 and C262. 264–266 is a binding site for GTP; the sequence is KLR. A [4Fe-4S] cluster-binding site is contributed by C276. The segment covering 309-318 has biased composition (basic and acidic residues); it reads KPKDGLKSSH. The disordered stretch occupies residues 309-330; sequence KPKDGLKSSHDTAASSMSQIGG. Residues 319–330 show a composition bias toward polar residues; sequence DTAASSMSQIGG.

Belongs to the radical SAM superfamily. MoaA family. Monomer and homodimer. [4Fe-4S] cluster is required as a cofactor.

It carries out the reaction GTP + AH2 + S-adenosyl-L-methionine = (8S)-3',8-cyclo-7,8-dihydroguanosine 5'-triphosphate + 5'-deoxyadenosine + L-methionine + A + H(+). It functions in the pathway cofactor biosynthesis; molybdopterin biosynthesis. Catalyzes the cyclization of GTP to (8S)-3',8-cyclo-7,8-dihydroguanosine 5'-triphosphate. This chain is GTP 3',8-cyclase, found in Chlorobaculum tepidum (strain ATCC 49652 / DSM 12025 / NBRC 103806 / TLS) (Chlorobium tepidum).